We begin with the raw amino-acid sequence, 318 residues long: Myoblast determination protein 1 (318 aa).

Met-1 is covalently cross-linked (Peptide (Met-Gly) (interchain with G-Cter in ubiquitin)). Lys-104 is subject to N6-methyllysine; by EHMT2. One can recognise a bHLH domain in the interval Asp-109–Leu-160. 2 disordered regions span residues Ala-175–Gly-224 and Ser-262–Leu-318. Over residues Ser-196–Ser-206 the composition is skewed to polar residues. Low complexity predominate over residues Ser-262–Pro-271. Residues Asp-272–Pro-282 are compositionally biased toward pro residues. Polar residues predominate over residues Ala-290–Gln-304.

In terms of assembly, efficient DNA binding requires dimerization with another bHLH protein. Seems to form active heterodimers with ITF-2. Interacts with SUV39H1. Interacts with DDX5. Interacts with CHD2. Interacts with TSC22D3. Interacts with SETD3. Interacts with P-TEFB complex; promotes the transcriptional activity of MYOD1 through its CDK9-mediated phosphorylation. Interacts with CSRP3. Interacts with NUPR1. In terms of processing, phosphorylated by CDK9. This phosphorylation promotes its function in muscle differentiation. Acetylated by a complex containing EP300 and PCAF. The acetylation is essential to activate target genes. Conversely, its deacetylation by SIRT1 inhibits its function. Post-translationally, ubiquitinated on the N-terminus; which is required for proteasomal degradation. In terms of processing, methylation at Lys-104 by EHMT2/G9a inhibits myogenic activity.

The protein resides in the nucleus. In terms of biological role, acts as a transcriptional activator that promotes transcription of muscle-specific target genes and plays a role in muscle differentiation. Together with MYF5 and MYOG, co-occupies muscle-specific gene promoter core region during myogenesis. Induces fibroblasts to differentiate into myoblasts. Interacts with and is inhibited by the twist protein. This interaction probably involves the basic domains of both proteins. The protein is Myoblast determination protein 1 (Myod1) of Rattus norvegicus (Rat).